Reading from the N-terminus, the 94-residue chain is Large ribosomal subunit protein bL25 (94 aa).

This sequence belongs to the bacterial ribosomal protein bL25 family. As to quaternary structure, part of the 50S ribosomal subunit; part of the 5S rRNA/L5/L18/L25 subcomplex. Contacts the 5S rRNA. Binds to the 5S rRNA independently of L5 and L18.

This is one of the proteins that binds to the 5S RNA in the ribosome where it forms part of the central protuberance. This Salmonella gallinarum (strain 287/91 / NCTC 13346) protein is Large ribosomal subunit protein bL25.